Reading from the N-terminus, the 480-residue chain is Protein nucleotidyltransferase YdiU (480 aa).

ATP is bound by residues Gly-86, Gly-88, Arg-89, Lys-109, Asp-121, Gly-122, Arg-172, and Arg-179. Asp-248 (proton acceptor) is an active-site residue. Residues Asn-249 and Asp-258 each contribute to the Mg(2+) site. ATP is bound at residue Asp-258.

It belongs to the SELO family. Mg(2+) is required as a cofactor. Mn(2+) serves as cofactor.

It catalyses the reaction L-seryl-[protein] + ATP = 3-O-(5'-adenylyl)-L-seryl-[protein] + diphosphate. The enzyme catalyses L-threonyl-[protein] + ATP = 3-O-(5'-adenylyl)-L-threonyl-[protein] + diphosphate. The catalysed reaction is L-tyrosyl-[protein] + ATP = O-(5'-adenylyl)-L-tyrosyl-[protein] + diphosphate. It carries out the reaction L-histidyl-[protein] + UTP = N(tele)-(5'-uridylyl)-L-histidyl-[protein] + diphosphate. It catalyses the reaction L-seryl-[protein] + UTP = O-(5'-uridylyl)-L-seryl-[protein] + diphosphate. The enzyme catalyses L-tyrosyl-[protein] + UTP = O-(5'-uridylyl)-L-tyrosyl-[protein] + diphosphate. Functionally, nucleotidyltransferase involved in the post-translational modification of proteins. It can catalyze the addition of adenosine monophosphate (AMP) or uridine monophosphate (UMP) to a protein, resulting in modifications known as AMPylation and UMPylation. This Klebsiella pneumoniae (strain 342) protein is Protein nucleotidyltransferase YdiU.